The following is a 382-amino-acid chain: U11/U12 small nuclear ribonucleoprotein 59 kDa protein (382 aa).

Residues 31 to 63 (NTKNITDQLKQLQDTLNLAKSMEKELEALKMIK) are a coiled coil. The interval 274 to 297 (SEENTTLTTSNKTNNDTDKDSNTN) is disordered. Positions 277–287 (NTTLTTSNKTN) are enriched in low complexity.

Component of the U11/U12 snRNPs that are part of the U12-type spliceosome.

It is found in the nucleus. This Arabidopsis thaliana (Mouse-ear cress) protein is U11/U12 small nuclear ribonucleoprotein 59 kDa protein (SNRNP59).